A 161-amino-acid chain; its full sequence is ATP synthase subunit b' (161 aa).

The helical transmembrane segment at 26–45 (LPLMAIQFLLLAFVLDKIFY) threads the bilayer.

The protein belongs to the ATPase B chain family. As to quaternary structure, F-type ATPases have 2 components, F(1) - the catalytic core - and F(0) - the membrane proton channel. F(1) has five subunits: alpha(3), beta(3), gamma(1), delta(1), epsilon(1). F(0) has four main subunits: a(1), b(1), b'(1) and c(10-14). The alpha and beta chains form an alternating ring which encloses part of the gamma chain. F(1) is attached to F(0) by a central stalk formed by the gamma and epsilon chains, while a peripheral stalk is formed by the delta, b and b' chains.

The protein resides in the cellular thylakoid membrane. In terms of biological role, f(1)F(0) ATP synthase produces ATP from ADP in the presence of a proton or sodium gradient. F-type ATPases consist of two structural domains, F(1) containing the extramembraneous catalytic core and F(0) containing the membrane proton channel, linked together by a central stalk and a peripheral stalk. During catalysis, ATP synthesis in the catalytic domain of F(1) is coupled via a rotary mechanism of the central stalk subunits to proton translocation. Component of the F(0) channel, it forms part of the peripheral stalk, linking F(1) to F(0). The b'-subunit is a diverged and duplicated form of b found in plants and photosynthetic bacteria. The sequence is that of ATP synthase subunit b' from Trichodesmium erythraeum (strain IMS101).